The chain runs to 1090 residues: Protein CHROMATIN REMODELING 24 (1090 aa).

2 disordered regions span residues 1 to 51 (MAEN…MIKL) and 247 to 273 (VGKQ…NLDR). A Nuclear localization signal motif is present at residues 44 to 51 (TKKSMIKL). A compositionally biased stretch (basic and acidic residues) spans 256 to 273 (RHFDDNSEDNRQGYNLDR). In terms of domain architecture, Helicase ATP-binding spans 389–564 (WSLHTQGKGG…WALFNFSCPG (176 aa)). ATP is bound at residue 402-409 (DDMGLGKT). Positions 515–518 (DEGH) match the DEAH box motif. Positions 736–895 (FIMSLLENLI…IRYFSQQDLR (160 aa)) constitute a Helicase C-terminal domain. Residues 1043–1069 (DGGAKIQKQIAELTRELKDMKAAERIN) are a coiled coil.

Belongs to the SNF2/RAD54 helicase family.

The protein localises to the nucleus. Its function is as follows. DNA helicase that acts as an essential component of the spindle assembly checkpoint. Probable chromatin remodeling factor that regulate homologous recombination (HR) and non-homologous recombination (NHR). This is Protein CHROMATIN REMODELING 24 from Arabidopsis thaliana (Mouse-ear cress).